The primary structure comprises 278 residues: Leucine-rich repeat-containing protein 10 (278 aa).

8 LRR repeats span residues 30-51 (LDRMVDLSGSQLRRFPVHVCSF), 52-74 (QELVKLYLSDNRLNSLPPELGQL), 76-97 (NLQILALDFNNFKALPQVVCTL), 98-121 (KQLCILYLGNNKLCDLPRELSLLQ), 123-143 (LRTLWVEANYLTKLPEVVCEL), 144-166 (SLLKTLHAGSNALRLLPGQLQRL), 167-189 (RELRTIWLSGNLLTDFPPVLLHM), and 191-213 (FLEIIDVDRNSIRYFPSLAHLSS). The segment covering 239–250 (RWAEETPEPDPR) has biased composition (basic and acidic residues). Positions 239–278 (RWAEETPEPDPRKARRYALAREESQEAQLPALPPLPPTNS) are disordered. The segment covering 269 to 278 (ALPPLPPTNS) has biased composition (pro residues).

The protein resides in the nucleus. May play important roles in cardiac development and/or cardiac function. The chain is Leucine-rich repeat-containing protein 10 (LRRC10) from Bos taurus (Bovine).